The sequence spans 679 residues: Penicillin-binding protein 1A (679 aa).

Basic residues predominate over residues 1–14 (MTERKREHKDRKQN). Residues 1–20 (MTERKREHKDRKQNKNSPKN) are disordered. At 1–30 (MTERKREHKDRKQNKNSPKNQSKVTKFLKW) the chain is on the cytoplasmic side. A helical; Signal-anchor for type II membrane protein membrane pass occupies residues 31–51 (FFIGILLLGITAVTVVGIYVL). Over 52 to 679 (SIIRSSPELD…QYKEVDNLVE (628 aa)) the chain is Extracellular. A transglycosylase region spans residues 72–244 (SILYDDQGNF…PTSYDGLSEA (173 aa)). Glu111 acts as the Proton donor; for transglycosylase activity in catalysis. A transpeptidase region spans residues 378–663 (ASATIIDYKT…TSPIFGKIMG (286 aa)). The active-site Acyl-ester intermediate; for transpeptidase activity is Ser417.

The protein in the N-terminal section; belongs to the glycosyltransferase 51 family. It in the C-terminal section; belongs to the transpeptidase family.

The protein resides in the cell membrane. It carries out the reaction [GlcNAc-(1-&gt;4)-Mur2Ac(oyl-L-Ala-gamma-D-Glu-L-Lys-D-Ala-D-Ala)](n)-di-trans,octa-cis-undecaprenyl diphosphate + beta-D-GlcNAc-(1-&gt;4)-Mur2Ac(oyl-L-Ala-gamma-D-Glu-L-Lys-D-Ala-D-Ala)-di-trans,octa-cis-undecaprenyl diphosphate = [GlcNAc-(1-&gt;4)-Mur2Ac(oyl-L-Ala-gamma-D-Glu-L-Lys-D-Ala-D-Ala)](n+1)-di-trans,octa-cis-undecaprenyl diphosphate + di-trans,octa-cis-undecaprenyl diphosphate + H(+). The catalysed reaction is Preferential cleavage: (Ac)2-L-Lys-D-Ala-|-D-Ala. Also transpeptidation of peptidyl-alanyl moieties that are N-acyl substituents of D-alanine.. Its pathway is cell wall biogenesis; peptidoglycan biosynthesis. Functionally, cell wall formation. Synthesis of cross-linked peptidoglycan from the lipid intermediates. The enzyme has a penicillin-insensitive transglycosylase N-terminal domain (formation of linear glycan strands) and a penicillin-sensitive transpeptidase C-terminal domain (cross-linking of the peptide subunits). This is Penicillin-binding protein 1A (pbpA) from Clostridium perfringens (strain 13 / Type A).